The following is a 601-amino-acid chain: FAD-binding monooxygenase stcW (601 aa).

Residues 42–43 (FS), Glu-64, Trp-73, Asp-84, Tyr-90, and Val-133 each bind FAD.

The protein belongs to the FAD-binding monooxygenase family. FAD is required as a cofactor.

Its pathway is mycotoxin biosynthesis; sterigmatocystin biosynthesis. Functionally, FAD-binding monooxygenase; part of the gene cluster that mediates the biosynthesis of sterigmatocystin (ST), a polyketide-derived furanocoumarin which is part of the most toxic and carcinogenic compounds among the known mycotoxins. The first step in the biosynthesis of sterigmatocystin is the production of hexanoate by the fatty acid synthase (FAS) units stcJ and stcK. The polyketide backbone is assembled by the non-reducing polyketide synthase stcA by condensation of the starter hexanoyl-CoA and 7 malonyl-CoA extender units followed by cyclization and release of norsolorinic acid. Norsolorinic acid is the first stable intermediate in the biosynthesis of sterigmatocystin and is converted into averantin (AVN) by the ketoreductase stcE which reduces the hexanoate ketone to an alcohol. Averantin is then oxidized into 5'-hydroxyaverantin (HAVN) by the cytochrome P450 monooxygenase stcF. 5'-hydroxyaverantin is further converted to 5'-oxyaverantin (OAVN) by the 5'-hydroxyaverantin dehydrogenase stcG. The next step is the conversion of OAVN into averufin (AVF) which is catalyzed by a yet to be identified enzyme. The cytochrome P450 monooxygenase stcB and the flavin-binding monooxygenase stcW are both required for the conversion of averufin to 1-hydroxyversicolorone. The esterase stcI probably catalyzes the formation of versiconal hemiacetal acetate from 1-hydroxyversicolorone. The oxydoreductase stcN then probably catalyzes the biosynthetic step from versiconal to versicolorin B (VERB). The next step is performed by the versicolorin B desaturase stcL to produce versicolorin A (VERA). The ketoreductase stcU and the cytochrome P450 monooxygenase stcS are involved in the conversion of versicolorin A to demethylsterigmatocystin. The Baeyer-Villiger oxidas stcQ and the reductase stcR might be involved in the biosynthetic step from versicolorin A to demethylsterigmatocystin. The final step in the biosynthesis of sterigmatocystin is the methylation of demethylsterigmatocystin catalyzed by the methyltransferase stcP. The protein is FAD-binding monooxygenase stcW of Emericella nidulans (strain FGSC A4 / ATCC 38163 / CBS 112.46 / NRRL 194 / M139) (Aspergillus nidulans).